A 479-amino-acid chain; its full sequence is Altronate oxidoreductase (479 aa).

18–29 (IIQFGEGNFLRA) lines the NAD(+) pocket.

The protein belongs to the mannitol dehydrogenase family. UxaB subfamily.

The catalysed reaction is D-altronate + NAD(+) = keto-D-tagaturonate + NADH + H(+). It functions in the pathway carbohydrate metabolism; pentose and glucuronate interconversion. The sequence is that of Altronate oxidoreductase from Bacteroides thetaiotaomicron (strain ATCC 29148 / DSM 2079 / JCM 5827 / CCUG 10774 / NCTC 10582 / VPI-5482 / E50).